A 108-amino-acid chain; its full sequence is UPF0060 membrane protein Ent638_1931 (108 aa).

The next 4 membrane-spanning stretches (helical) occupy residues 6 to 26 (LLFF…WLWL), 29 to 49 (GASV…VWLL), 61 to 81 (AAYG…VDGV), and 85 to 105 (AYDW…VAGW).

Belongs to the UPF0060 family.

It is found in the cell inner membrane. The protein is UPF0060 membrane protein Ent638_1931 of Enterobacter sp. (strain 638).